Reading from the N-terminus, the 67-residue chain is UPF0253 protein VS_2370 (67 aa).

Belongs to the UPF0253 family.

This chain is UPF0253 protein VS_2370, found in Vibrio atlanticus (strain LGP32) (Vibrio splendidus (strain Mel32)).